The primary structure comprises 420 residues: Serine hydroxymethyltransferase (420 aa).

Residues Leu-121 and 125-127 (GHL) contribute to the (6S)-5,6,7,8-tetrahydrofolate site. The residue at position 230 (Lys-230) is an N6-(pyridoxal phosphate)lysine. 355–357 (SPF) contributes to the (6S)-5,6,7,8-tetrahydrofolate binding site.

It belongs to the SHMT family. As to quaternary structure, homodimer. The cofactor is pyridoxal 5'-phosphate.

It is found in the cytoplasm. It catalyses the reaction (6R)-5,10-methylene-5,6,7,8-tetrahydrofolate + glycine + H2O = (6S)-5,6,7,8-tetrahydrofolate + L-serine. Its pathway is one-carbon metabolism; tetrahydrofolate interconversion. It participates in amino-acid biosynthesis; glycine biosynthesis; glycine from L-serine: step 1/1. Its function is as follows. Catalyzes the reversible interconversion of serine and glycine with tetrahydrofolate (THF) serving as the one-carbon carrier. This reaction serves as the major source of one-carbon groups required for the biosynthesis of purines, thymidylate, methionine, and other important biomolecules. Also exhibits THF-independent aldolase activity toward beta-hydroxyamino acids, producing glycine and aldehydes, via a retro-aldol mechanism. The protein is Serine hydroxymethyltransferase of Streptococcus mutans serotype c (strain ATCC 700610 / UA159).